Here is a 377-residue protein sequence, read N- to C-terminus: Hydrogenase maturation factor HypD (377 aa).

Residues Cys-41, Cys-69, and Cys-72 each contribute to the Fe cation site.

This sequence belongs to the HypD family. Requires [4Fe-4S] cluster as cofactor.

Its pathway is protein modification; [NiFe] hydrogenase maturation. In terms of biological role, involved in the maturation of [NiFe] hydrogenases. Involved in the biosynthesis of the Fe(CN)(2)CO cofactor. The sequence is that of Hydrogenase maturation factor HypD from Rhodobacter capsulatus (Rhodopseudomonas capsulata).